The sequence spans 205 residues: Thiamine-phosphate synthase (205 aa).

4-amino-2-methyl-5-(diphosphooxymethyl)pyrimidine-binding positions include 34 to 38 (QLRCK) and Asn-66. Residues Asp-67 and Asp-86 each coordinate Mg(2+). Ser-105 contributes to the 4-amino-2-methyl-5-(diphosphooxymethyl)pyrimidine binding site. 131 to 133 (TTT) contributes to the 2-[(2R,5Z)-2-carboxy-4-methylthiazol-5(2H)-ylidene]ethyl phosphate binding site. Lys-134 serves as a coordination point for 4-amino-2-methyl-5-(diphosphooxymethyl)pyrimidine. Gly-163 serves as a coordination point for 2-[(2R,5Z)-2-carboxy-4-methylthiazol-5(2H)-ylidene]ethyl phosphate.

This sequence belongs to the thiamine-phosphate synthase family. Requires Mg(2+) as cofactor.

It catalyses the reaction 2-[(2R,5Z)-2-carboxy-4-methylthiazol-5(2H)-ylidene]ethyl phosphate + 4-amino-2-methyl-5-(diphosphooxymethyl)pyrimidine + 2 H(+) = thiamine phosphate + CO2 + diphosphate. The catalysed reaction is 2-(2-carboxy-4-methylthiazol-5-yl)ethyl phosphate + 4-amino-2-methyl-5-(diphosphooxymethyl)pyrimidine + 2 H(+) = thiamine phosphate + CO2 + diphosphate. The enzyme catalyses 4-methyl-5-(2-phosphooxyethyl)-thiazole + 4-amino-2-methyl-5-(diphosphooxymethyl)pyrimidine + H(+) = thiamine phosphate + diphosphate. Its pathway is cofactor biosynthesis; thiamine diphosphate biosynthesis; thiamine phosphate from 4-amino-2-methyl-5-diphosphomethylpyrimidine and 4-methyl-5-(2-phosphoethyl)-thiazole: step 1/1. In terms of biological role, condenses 4-methyl-5-(beta-hydroxyethyl)thiazole monophosphate (THZ-P) and 2-methyl-4-amino-5-hydroxymethyl pyrimidine pyrophosphate (HMP-PP) to form thiamine monophosphate (TMP). This is Thiamine-phosphate synthase from Neisseria gonorrhoeae (strain ATCC 700825 / FA 1090).